A 58-amino-acid chain; its full sequence is Birtoxin (58 aa).

The 56-residue stretch at 3–58 (VPGNYPLDKDGNTYKCFLLGGNEECLNVCKLHGVQYGYCYASKCWCEYLEDDKDSV) folds into the LCN-type CS-alpha/beta domain. 3 cysteine pairs are disulfide-bonded: Cys18-Cys41, Cys27-Cys46, and Cys31-Cys48.

Expressed by the venom gland.

Its subcellular location is the secreted. Functionally, beta toxins bind voltage-independently at site-4 of sodium channels (Nav) and shift the voltage of activation toward more negative potentials thereby affecting sodium channel activation and promoting spontaneous and repetitive firing. Moderately toxic, but very high abundant. Does not target reptilian channels. Does not produce effect when administered to blowfly and cabbage looper larvae. In mice, produces convulsions, tremors, increased ventilation and, subsequently, death. This chain is Birtoxin, found in Parabuthus transvaalicus (Transvaal thick-tailed scorpion).